The sequence spans 118 residues: Basic phospholipase A2 PA-15 (118 aa).

7 disulfide bridges follow: Cys11-Cys71, Cys27-Cys117, Cys29-Cys45, Cys44-Cys98, Cys51-Cys91, Cys60-Cys84, and Cys78-Cys89. Residues Tyr28, Gly30, and Gly32 each coordinate Ca(2+). Residue His48 is part of the active site. Asp49 is a binding site for Ca(2+). Asp92 is an active-site residue.

The protein belongs to the phospholipase A2 family. Group I subfamily. D49 sub-subfamily. It depends on Ca(2+) as a cofactor. As to expression, expressed by the venom gland.

It is found in the secreted. The catalysed reaction is a 1,2-diacyl-sn-glycero-3-phosphocholine + H2O = a 1-acyl-sn-glycero-3-phosphocholine + a fatty acid + H(+). PLA2 catalyzes the calcium-dependent hydrolysis of the 2-acyl groups in 3-sn-phosphoglycerides. This Pseudechis australis (Mulga snake) protein is Basic phospholipase A2 PA-15.